The primary structure comprises 521 residues: GMP synthase [glutamine-hydrolyzing] (521 aa).

A Glutamine amidotransferase type-1 domain is found at 10–204 (SLLILDFGSQ…ALGICGCEND (195 aa)). C87 serves as the catalytic Nucleophile. Active-site residues include H178 and E180. Residues 205-396 (WNMHNFAEEQ…LGMPREMLMR (192 aa)) enclose the GMPS ATP-PPase domain. 232–238 (SGGVDSS) contributes to the ATP binding site.

In terms of assembly, homodimer.

The enzyme catalyses XMP + L-glutamine + ATP + H2O = GMP + L-glutamate + AMP + diphosphate + 2 H(+). The protein operates within purine metabolism; GMP biosynthesis; GMP from XMP (L-Gln route): step 1/1. Functionally, catalyzes the synthesis of GMP from XMP. In Wolinella succinogenes (strain ATCC 29543 / DSM 1740 / CCUG 13145 / JCM 31913 / LMG 7466 / NCTC 11488 / FDC 602W) (Vibrio succinogenes), this protein is GMP synthase [glutamine-hydrolyzing].